A 370-amino-acid polypeptide reads, in one-letter code: Cyanuric acid amidohydrolase (370 aa).

The segment at 1 to 103 (MQAQVFRVPM…TIFTVQKTDN (103 aa)) is RU A. Substrate-binding positions include Arg-51 and 82–83 (SG). Residues 113-250 (RLAVQQIFTR…NEIIVMGNSR (138 aa)) are RU B. Residue Lys-163 is part of the active site. Residues Arg-195 and 233 to 234 (SA) each bind substrate. Catalysis depends on Ser-233, which acts as the Nucleophile. The interval 256-370 (LVIGHAEMKD…GPVAVIARTA (115 aa)) is RU C. Glu-303 lines the Mg(2+) pocket. Residues Arg-330 and 349-350 (SG) contribute to the substrate site. Positions 352, 355, 356, 357, and 360 each coordinate Mg(2+).

Belongs to the cyclic amide hydrolase (CyAH) family. In terms of assembly, homotetramer.

It catalyses the reaction cyanurate + H2O = 1-carboxybiuret + H(+). It functions in the pathway xenobiotic degradation; atrazine degradation; biuret from cyanurate: step 1/1. Its activity is regulated as follows. Inhibited by barbituric acid. Functionally, responsible for the hydrolysis of cyanuric acid, an intermediate formed during catabolism of s-triazine based compounds in herbicides such as atrazine and polymers such as melamine. Catalyzes the hydrolytic opening of the s-triazine ring of cyanuric acid (2,4,6-trihydroxy-s-triazine) to yield carbon dioxide and carboxybiuret, which spontaneously decarboxylates to biuret. The sequence is that of Cyanuric acid amidohydrolase (trzD) from Pseudomonas sp.